We begin with the raw amino-acid sequence, 449 residues long: Trigger factor (449 aa).

The PPIase FKBP-type domain occupies 173–258 (GDRVTVDFVG…LKKVEWPHLP (86 aa)).

This sequence belongs to the FKBP-type PPIase family. Tig subfamily.

The protein localises to the cytoplasm. It carries out the reaction [protein]-peptidylproline (omega=180) = [protein]-peptidylproline (omega=0). In terms of biological role, involved in protein export. Acts as a chaperone by maintaining the newly synthesized protein in an open conformation. Functions as a peptidyl-prolyl cis-trans isomerase. This Burkholderia pseudomallei (strain 1710b) protein is Trigger factor.